The chain runs to 52 residues: Disintegrin multisquamatin (52 aa).

Residues 1–50 (EGEECESGPCCRNCKFLKEGTICKRARGDDMDDYCNGKTCDCPRNPHKGP) enclose the Disintegrin domain. Intrachain disulfides connect cysteine 5–cysteine 14, cysteine 10–cysteine 35, cysteine 11–cysteine 40, and cysteine 23–cysteine 42. The Cell attachment site motif lies at 27–29 (RGD).

Belongs to the venom metalloproteinase (M12B) family. P-II subfamily. P-IIa sub-subfamily. In terms of assembly, monomer. As to expression, expressed by the venom gland.

Its subcellular location is the secreted. In terms of biological role, inhibits ADP-induced human, canine and rabbit platelet aggregation by binding with high affinity to alpha-IIb/beta-3 (ITGA2B/ITGB3). The polypeptide is Disintegrin multisquamatin (Echis multisquamatus (Central Asian sand viper)).